Consider the following 1020-residue polypeptide: Nucleotide-binding oligomerization domain-containing protein 2 (1020 aa).

CARD domains are found at residues cysteine 6 to aspartate 104 and histidine 106 to glutamine 200. The ATG16L1-binding motif motif lies at tryptophan 43–proline 57. Positions 219, 232, 233, 282, 283, 284, 285, 286, and 287 each coordinate ADP. The required for CARD9 binding stretch occupies residues aspartate 221 to alanine 254. The 328-residue stretch at aspartate 273–aspartate 600 folds into the NACHT domain. A lipid anchor (S-palmitoyl cysteine) is attached at cysteine 375. Histidine 583 serves as a coordination point for ADP. 10 LRR repeats span residues alanine 685–glutamate 709, leucine 726–leucine 749, leucine 766–proline 792, leucine 794–glutamate 817, cysteine 822–lysine 845, lysine 850–glutamine 873, histidine 906–leucine 929, asparagine 934–asparagine 962, serine 963–glutamine 985, and leucine 1005–leucine 1019.

This sequence belongs to the NOD1-NOD2 family. Homooligomer: homooligomerizes following muramyl dipeptide (MDP)-binding, promoting RIPK2 recruitment. Interacts (via CARD domain) with RIPK2 (via CARD domain). Following RIPK2 recruitment, RIPK2 homooligomerizes via its CARD domain and forms long filaments named RIPosomes. Interacts (via CARD domain) with ubiquitin; inhibiting interaction with RIPK2. Component of a signaling complex consisting of ARHGEF2, NOD2 and RIPK2. Interacts with ANKRD17 (via N-terminus). Interacts with HSPA1A; the interaction enhances NOD2 stability. Interacts (via both CARD domains) with HSP90; the interaction enhances NOD2 stability. Interacts (via CARD domain) with SOCS3; the interaction promotes NOD2 degradation. Interacts (via CARD domain) with ERBIN; the interaction inhibits activation of NOD2. Interacts with MAPKBP1; the interaction is enhanced in the presence of muramyl dipeptide (MDP) and inhibits NOD2 homooligomerization and activation. Interacts with INAVA; the interaction takes place upon Pattern recognition receptor (PRR) stimulation. Interacts (via NACHT domain) with CARD9. Interacts (via CARD domain) with CASP1; this interaction leads to IL1B processing. Also interacts with CASP4. Interacts with NLRP1; this interaction is enhanced in the presence of muramyl dipeptide (MDP) and leads to increased IL1B release. Interacts with NLRP12; this interaction promotes degradation of NOD2 through the ubiquitin-proteasome pathway. Interacts with ANKHD1, C10orf67, CHMP5, DOCK7, ENTR1, KRT15, LDOC1, PPP1R12C, PPP2R3B, TRIM41 and VIM. Interacts with MAVS; interaction takes place following single-stranded RNA (ssRNA)-binding. Interacts with ATG16L1. Interacts with Irgm1; promoting Irgm1 'Lys-63'-linked polyubiquitination, which is required for interactions with the core autophagy factors. In terms of processing, palmitoylated by ZDHHC5; palmitoylation is required for proper recruitment to the bacterial entry site and hence for proper signaling upon cognate peptidoglycan detection. Palmitoylation promotes localization to the cell membrane. Palmitoylation protects from SQSTM1/p62-dependent autophagic degradation. Polyubiquitinated by TRIM27, leading to proteasome-mediated degradation. Polyubiquitinated and degraded following muramyl dipeptide (MDP) stimulation, conferring MDP tolerance and preventing septic shock. Post-translationally, degraded via selective autophagy following interaction with Irgm1. Irgm1 promotes NOD2-RIPK2 RIPosome recruitment to autophagosome membranes, promoting their SQSTM1/p62-dependent autophagic degradation. In terms of processing, O-glycosylated by OGT, O-GlcNAcylation increases protein stability. Expressed in monocytes, macrophages, dendritic cells, hepatocytes, preadipocytes, epithelial cells of oral cavity, lung and intestine. In intestine, highly expressed in ileal Paneth cells of the crypt and in intestinal stem cells. Also expressed in neurons of several brain regions including the hypothalamus.

Its subcellular location is the cell membrane. It localises to the basolateral cell membrane. The protein resides in the cytoplasm. The protein localises to the mitochondrion. With respect to regulation, ADP-binding promotes an inactive closed conformation. Its function is as follows. Pattern recognition receptor (PRR) that detects bacterial peptidoglycan fragments and other danger signals and plays an important role in gastrointestinal immunity. Specifically activated by muramyl dipeptide (MDP), a fragment of bacterial peptidoglycan found in every bacterial peptidoglycan type. NOD2 specifically recognizes and binds 6-O-phospho-MDP, the phosphorylated form of MDP, which is generated by NAGK. 6-O-phospho-MDP-binding triggers oligomerization that facilitates the binding and subsequent activation of the proximal adapter receptor-interacting RIPK2. Following recruitment, RIPK2 undergoes 'Met-1'- (linear) and 'Lys-63'-linked polyubiquitination by E3 ubiquitin-protein ligases XIAP, BIRC2, BIRC3 and the LUBAC complex, becoming a scaffolding protein for downstream effectors, triggering activation of the NF-kappa-B and MAP kinases signaling. This in turn leads to the transcriptional activation of hundreds of genes involved in immune response. Its ability to detect bacterial MDP plays a central role in maintaining the equilibrium between intestinal microbiota and host immune responses to control inflammation. An imbalance in this relationship results in dysbiosis, whereby pathogenic bacteria prevail on commensals, causing damage in the intestinal epithelial barrier as well as allowing bacterial invasion and inflammation. Acts as a regulator of appetite by sensing MDP in a subset of brain neurons: microbiota-derived MDP reach the brain, where they bind and activate NOD2 in inhibitory hypothalamic neurons, decreasing neuronal activity, thereby regulating satiety and body temperature. NOD2-dependent MDP-sensing of bacterial cell walls in the intestinal epithelial compartment contributes to sustained postnatal growth upon undernutrition. Also plays a role in antiviral response by acting as a sensor of single-stranded RNA (ssRNA) from viruses: upon ssRNA-binding, interacts with MAVS, leading to activation of interferon regulatory factor-3/IRF3 and expression of type I interferon. Also acts as a regulator of autophagy in dendritic cells via its interaction with ATG16L1, possibly by recruiting ATG16L1 at the site of bacterial entry. NOD2 activation in the small intestine crypt also contributes to intestinal stem cells survival and function: acts by promoting mitophagy via its association with ATG16L1. In addition to its main role in innate immunity, also regulates the adaptive immune system by acting as regulator of helper T-cell and regulatory T-cells (Tregs). Besides recognizing pathogens, also involved in the endoplasmic reticulum stress response: acts by sensing and binding to the cytosolic metabolite sphingosine-1-phosphate generated in response to endoplasmic reticulum stress, initiating an inflammation process that leads to activation of the NF-kappa-B and MAP kinases signaling. May also be involved in NLRP1 activation following activation by MDP, leading to CASP1 activation and IL1B release in macrophages. The chain is Nucleotide-binding oligomerization domain-containing protein 2 from Mus musculus (Mouse).